Here is a 203-residue protein sequence, read N- to C-terminus: Dephospho-CoA kinase (203 aa).

Residues 3 to 201 (SVGLTGGIGS…QRYLGYAAAA (199 aa)) enclose the DPCK domain. An ATP-binding site is contributed by 11-16 (GSGKTT).

Belongs to the CoaE family.

Its subcellular location is the cytoplasm. The catalysed reaction is 3'-dephospho-CoA + ATP = ADP + CoA + H(+). It functions in the pathway cofactor biosynthesis; coenzyme A biosynthesis; CoA from (R)-pantothenate: step 5/5. Catalyzes the phosphorylation of the 3'-hydroxyl group of dephosphocoenzyme A to form coenzyme A. This is Dephospho-CoA kinase from Burkholderia thailandensis (strain ATCC 700388 / DSM 13276 / CCUG 48851 / CIP 106301 / E264).